The chain runs to 895 residues: WD repeat-containing protein 36 (895 aa).

WD repeat units lie at residues 30–63, 72–101, 110–143, 152–186, 193–230, 237–272, 277–320, and 327–361; these read VVRFSALKRRFYVTTCVGKSFHTYDVQKLSLVAV, CCMAADGRLVFAAYGNVFSAFARNKEIVHT, HFLQPFGDHIISVDTDGILIIWHIYSEEEYLQLT, SAILHPSTYLNKILLGSEQGSLQLWNVKSNKLLYT, GVTALQQAPAVDVVAIGLMSGQVIIHNIKFNETLMKFR, TSISFRTDGHPVMAAGSPCGHIGLWDLEDKKLINQM, STAI…RFRM, and TNIRYYGQNGQQILSASQDGTLQSFSTVHEKFNKS. 2 positions are modified to phosphoserine: Ser382 and Ser399. WD repeat units lie at residues 389–428, 441–475, 486–522, 527–562, 564–605, and 607–645; these read TKFAAEEARESDWDGIIACHQGKLSCSTWNYQKSTIGAYF, ATAVDITSCGNFAVIGLSSGTVDVYNMQSGIHRGS, VRGVAVDGLNQLTVTTGSEGLLKFWNFKNKILIHSVS, PNIMLLHRDSGILGLALDDFSISVLDIETRKIVREF, GHQG…DCFL, and DSAPLNVSMSPTGDFLATSHVDHLGIYLWSNISLYSVVS.

As to quaternary structure, part of the small subunit (SSU) processome, composed of more than 70 proteins and the RNA chaperone small nucleolar RNA (snoRNA) U3. In terms of tissue distribution, expressed in heart, placenta, liver, skeletal muscle, kidney and pancreas. In ocular tissues, strong expression in iris, sclera, ciliary muscle, ciliary body, retina and optic nerve.

The protein resides in the nucleus. The protein localises to the nucleolus. In terms of biological role, part of the small subunit (SSU) processome, first precursor of the small eukaryotic ribosomal subunit. During the assembly of the SSU processome in the nucleolus, many ribosome biogenesis factors, an RNA chaperone and ribosomal proteins associate with the nascent pre-rRNA and work in concert to generate RNA folding, modifications, rearrangements and cleavage as well as targeted degradation of pre-ribosomal RNA by the RNA exosome. Involved in the nucleolar processing of SSU 18S rRNA. Involved in T-cell activation and highly coregulated with IL2. This is WD repeat-containing protein 36 from Homo sapiens (Human).